The following is a 429-amino-acid chain: Glutamate-1-semialdehyde 2,1-aminomutase 2 (429 aa).

Lysine 267 bears the N6-(pyridoxal phosphate)lysine mark.

Belongs to the class-III pyridoxal-phosphate-dependent aminotransferase family. HemL subfamily. Homodimer. The cofactor is pyridoxal 5'-phosphate.

The protein localises to the cytoplasm. It carries out the reaction (S)-4-amino-5-oxopentanoate = 5-aminolevulinate. It participates in porphyrin-containing compound metabolism; protoporphyrin-IX biosynthesis; 5-aminolevulinate from L-glutamyl-tRNA(Glu): step 2/2. This is Glutamate-1-semialdehyde 2,1-aminomutase 2 from Brevibacillus brevis (strain 47 / JCM 6285 / NBRC 100599).